Consider the following 45-residue polypeptide: Large ribosomal subunit protein bL34 (45 aa).

The tract at residues Met-1–Arg-24 is disordered. Residues Ser-10–Arg-24 show a composition bias toward basic residues.

The protein belongs to the bacterial ribosomal protein bL34 family.

This Prochlorococcus marinus (strain MIT 9303) protein is Large ribosomal subunit protein bL34.